The primary structure comprises 331 residues: Adenosine deaminase (331 aa).

His-12 and His-14 together coordinate Zn(2+). Positions 14, 16, and 170 each coordinate substrate. His-197 lines the Zn(2+) pocket. The Proton donor role is filled by Glu-200. Asp-278 provides a ligand contact to Zn(2+). Asp-279 contributes to the substrate binding site.

The protein belongs to the metallo-dependent hydrolases superfamily. Adenosine and AMP deaminases family. Adenosine deaminase subfamily. The cofactor is Zn(2+).

It catalyses the reaction adenosine + H2O + H(+) = inosine + NH4(+). It carries out the reaction 2'-deoxyadenosine + H2O + H(+) = 2'-deoxyinosine + NH4(+). Catalyzes the hydrolytic deamination of adenosine and 2-deoxyadenosine. This Shewanella oneidensis (strain ATCC 700550 / JCM 31522 / CIP 106686 / LMG 19005 / NCIMB 14063 / MR-1) protein is Adenosine deaminase.